The chain runs to 228 residues: N-acylneuraminate cytidylyltransferase (228 aa).

Belongs to the CMP-NeuNAc synthase family.

It is found in the cytoplasm. It catalyses the reaction an N-acylneuraminate + CTP = a CMP-N-acyl-beta-neuraminate + diphosphate. In Neisseria meningitidis serogroup B (strain ATCC BAA-335 / MC58), this protein is N-acylneuraminate cytidylyltransferase (neuA).